We begin with the raw amino-acid sequence, 295 residues long: Ribose-phosphate pyrophosphokinase (295 aa).

ATP is bound by residues 46–48 (DGE) and 101–102 (RQ). Mg(2+)-binding residues include His-132 and Asp-171. The active site involves Lys-194. D-ribose 5-phosphate contacts are provided by Arg-196 and Asp-220.

Belongs to the ribose-phosphate pyrophosphokinase family. Class III (archaeal) subfamily. It depends on Mg(2+) as a cofactor.

The protein localises to the cytoplasm. It catalyses the reaction D-ribose 5-phosphate + ATP = 5-phospho-alpha-D-ribose 1-diphosphate + AMP + H(+). Its pathway is metabolic intermediate biosynthesis; 5-phospho-alpha-D-ribose 1-diphosphate biosynthesis; 5-phospho-alpha-D-ribose 1-diphosphate from D-ribose 5-phosphate (route I): step 1/1. In terms of biological role, involved in the biosynthesis of the central metabolite phospho-alpha-D-ribosyl-1-pyrophosphate (PRPP) via the transfer of pyrophosphoryl group from ATP to 1-hydroxyl of ribose-5-phosphate (Rib-5-P). The polypeptide is Ribose-phosphate pyrophosphokinase (Methanosarcina mazei (strain ATCC BAA-159 / DSM 3647 / Goe1 / Go1 / JCM 11833 / OCM 88) (Methanosarcina frisia)).